The chain runs to 319 residues: L-lactate dehydrogenase (319 aa).

NAD(+)-binding positions include 10-11 (RV), Asp32, Arg37, Tyr62, and 76-77 (GV). Residues Gln79, Arg85, and 117-120 (NPVD) contribute to the substrate site. Residues 115–117 (VTN) and Ser140 each bind NAD(+). Substrate is bound at residue 145–148 (DTAR). Beta-D-fructose 1,6-bisphosphate contacts are provided by Arg150 and His165. Catalysis depends on His172, which acts as the Proton acceptor. A Phosphotyrosine modification is found at Tyr217. Thr226 contributes to the substrate binding site.

The protein belongs to the LDH/MDH superfamily. LDH family. Homotetramer.

Its subcellular location is the cytoplasm. The catalysed reaction is (S)-lactate + NAD(+) = pyruvate + NADH + H(+). It functions in the pathway fermentation; pyruvate fermentation to lactate; (S)-lactate from pyruvate: step 1/1. With respect to regulation, allosterically activated by fructose 1,6-bisphosphate (FBP). Inactivated by Mn(2+), Co(2+), Cd(2+) and Zn(2+). Its function is as follows. Catalyzes the conversion of lactate to pyruvate. It is stereospecific for L(+)-lactate. This Thermotoga maritima (strain ATCC 43589 / DSM 3109 / JCM 10099 / NBRC 100826 / MSB8) protein is L-lactate dehydrogenase.